A 191-amino-acid chain; its full sequence is Ribonuclease HII (191 aa).

An RNase H type-2 domain is found at 16 to 191 (INLIGIDEAG…KLHRKSFKLL (176 aa)). 3 residues coordinate a divalent metal cation: aspartate 22, glutamate 23, and aspartate 110.

It belongs to the RNase HII family. Mn(2+) serves as cofactor. Mg(2+) is required as a cofactor.

The protein localises to the cytoplasm. It catalyses the reaction Endonucleolytic cleavage to 5'-phosphomonoester.. Endonuclease that specifically degrades the RNA of RNA-DNA hybrids. The polypeptide is Ribonuclease HII (Campylobacter jejuni subsp. jejuni serotype O:6 (strain 81116 / NCTC 11828)).